The sequence spans 674 residues: Ribonuclease E (674 aa).

An S1 motif domain is found at 35-117 (GDIYLGLVDN…LTGNISMPGR (83 aa)). Aspartate 296 and aspartate 339 together coordinate Mg(2+). Residues cysteine 397 and cysteine 400 each coordinate Zn(2+). Disordered regions lie at residues 458 to 529 (PLDL…RRVE) and 626 to 674 (QPRE…SSAE). Composition is skewed to basic and acidic residues over residues 484–493 (GSEFSEKENI) and 509–529 (TKEK…RRVE). The segment covering 663–674 (RPGRRRRRSSAE) has biased composition (basic residues). The C4 Arg-rich motif, probably responsible for interaction with PNPase motif lies at 665–673 (GRRRRRSSA).

Belongs to the RNase E/G family. Fractionates in a 250-300 kDa region, which is too small to be the equivalent of an RNA degradosome, as occurs with E.coli RNase E. Interacts with polynucleotide phosphorylase (PNPase, pnp), probably via the C4 Arg-rich motif (residues 665-673). Mg(2+) serves as cofactor.

It is found in the cytoplasm. Its subcellular location is the cell inner membrane. The catalysed reaction is Endonucleolytic cleavage of single-stranded RNA in A- and U-rich regions.. Its function is as follows. Endoribonuclease that plays a central role in rRNA processing and mRNA decay, and probably tRNA processing. Acts on 9S rRNA (the precursor of 5S rRNA) and RNAI, a molecule that controls the replication of ColE1 plasmid. Upon expression in E.coli does not purify with endogenous degradosome proteins. Prefers 5'-monophosphorylated substrates over 5'-triphosphorylated substrates. Complements an rne temperature-sensitive mutation in E.coli, despite being considerably shorter and not able to interact with the E.coli degradosome. Cleaves AU-rich sequences in vitro, tested with psbA2 mRNA. Complements both an rne temperature-sensitive mutation and an rng deletion in E.coli. Acts in the degradation of psaL mRNA in the presence but not the absence of the sRNA PsrR1. Cleaves the rimO-crhR transcript, contributing to the very short half-life of rimO mRNA. In terms of biological role, mRNA for psbA2, one of the core proteins in photosystem II, is degraded in the dark under control of a cis-acting AU-rich box in its 5'-UTR. RNase E cuts in this box, suggesting it is involved in this dark-induced mRNA instability. CRISPR (clustered regularly interspaced short palindromic repeat) is an adaptive immune system that provides protection against mobile genetic elements (viruses, transposable elements and conjugative plasmids). CRISPR clusters contain spacers, sequences complementary to antecedent mobile elements, and target invading nucleic acids. CRISPR clusters are transcribed and processed into CRISPR RNA (crRNA). Endogenous RNase E is required for correct processing of pre-crRNA for the CRISPR3 subtype III-B system in this genome (genes sll7080 to sll7095). This CRISPR3 system does not include a cas6 gene, which is the usual RNase involved in crRNA maturation. The protein is Ribonuclease E of Synechocystis sp. (strain ATCC 27184 / PCC 6803 / Kazusa).